Reading from the N-terminus, the 70-residue chain is ATP synthase subunit c (70 aa).

2 helical membrane-spanning segments follow: residues 4–24 and 47–67; these read IAAG…NGLV and FIGV…ALMV.

This sequence belongs to the ATPase C chain family. As to quaternary structure, F-type ATPases have 2 components, F(1) - the catalytic core - and F(0) - the membrane proton channel. F(1) has five subunits: alpha(3), beta(3), gamma(1), delta(1), epsilon(1). F(0) has three main subunits: a(1), b(2) and c(10-14). The alpha and beta chains form an alternating ring which encloses part of the gamma chain. F(1) is attached to F(0) by a central stalk formed by the gamma and epsilon chains, while a peripheral stalk is formed by the delta and b chains.

It is found in the cell membrane. Functionally, f(1)F(0) ATP synthase produces ATP from ADP in the presence of a proton or sodium gradient. F-type ATPases consist of two structural domains, F(1) containing the extramembraneous catalytic core and F(0) containing the membrane proton channel, linked together by a central stalk and a peripheral stalk. During catalysis, ATP synthesis in the catalytic domain of F(1) is coupled via a rotary mechanism of the central stalk subunits to proton translocation. Its function is as follows. Key component of the F(0) channel; it plays a direct role in translocation across the membrane. A homomeric c-ring of between 10-14 subunits forms the central stalk rotor element with the F(1) delta and epsilon subunits. The sequence is that of ATP synthase subunit c from Lactiplantibacillus plantarum (strain ATCC BAA-793 / NCIMB 8826 / WCFS1) (Lactobacillus plantarum).